Consider the following 215-residue polypeptide: Extracellular small neutral protease (215 aa).

The signal sequence occupies residues 1 to 30 (MRMTRAASALAGLGLAVAAALGSVAPASAA). Threonine 152 is a Ca(2+) binding site. Zn(2+) is bound at residue histidine 157. The active site involves glutamate 158. 2 residues coordinate Zn(2+): histidine 161 and aspartate 167. Residues cysteine 173 and cysteine 186 are joined by a disulfide bond.

This sequence belongs to the peptidase M7 family. Requires Zn(2+) as cofactor.

It is found in the secreted. The catalysed reaction is Hydrolyzes proteins with a preference for Tyr or Phe in the P1' position. Has no action on amino-acid p-nitroanilides.. This chain is Extracellular small neutral protease (snpA), found in Streptomyces coelicolor.